The primary structure comprises 423 residues: Putative competence-damage inducible protein (423 aa).

The protein belongs to the CinA family.

This Streptococcus uberis (strain ATCC BAA-854 / 0140J) protein is Putative competence-damage inducible protein.